Here is a 765-residue protein sequence, read N- to C-terminus: Endosialin (765 aa).

Positions 1-17 are cleaved as a signal peptide; sequence MLLRLLLAWVAAVPALG. Topologically, residues 18–695 are extracellular; the sequence is QVPWTPEPRA…GQSQRDDRWL (678 aa). The C-type lectin domain occupies 30–156; it reads GPSSCYALFP…CTLAVDGYLC (127 aa). 6 cysteine pairs are disulfide-bonded: cysteine 131–cysteine 147, cysteine 164–cysteine 213, cysteine 203–cysteine 230, cysteine 316–cysteine 326, cysteine 322–cysteine 335, and cysteine 337–cysteine 350. A Sushi domain is found at 162–232; sequence GACPALPLEV…WSQTGPLCPG (71 aa). The EGF-like; calcium-binding domain maps to 312 to 351; the sequence is DTDECQIAGVCQQMCVNYVGGFECYCSEGHELEADGISCS. Residues threonine 401, threonine 428, threonine 448, threonine 456, threonine 459, and threonine 466 are each glycosylated (O-linked (GalNAc...) threonine). O-linked (GalNAc...) serine glycosylation is found at serine 467 and serine 470. Residue threonine 472 is glycosylated (O-linked (GalNAc...) threonine). Serine 477 carries an O-linked (GalNAc...) serine glycan. 11 O-linked (GalNAc...) threonine glycosylation sites follow: threonine 488, threonine 517, threonine 520, threonine 535, threonine 552, threonine 554, threonine 556, threonine 570, threonine 571, threonine 604, and threonine 613. The segment at 548-675 is disordered; that stretch reads MSPDTHTITY…QLPSVPSTAA (128 aa). The segment covering 622–633 has biased composition (pro residues); the sequence is PAFPSSPLPPQR. 2 O-linked (GalNAc...) serine glycosylation sites follow: serine 626 and serine 627. Residues threonine 635 and threonine 638 are each glycosylated (O-linked (GalNAc...) threonine). A compositionally biased stretch (polar residues) spans 635–647; that stretch reads TNQTSSISPTHSY. O-linked (GalNAc...) serine glycosylation is found at serine 639 and serine 640. O-linked (GalNAc...) threonine glycosylation occurs at threonine 644. Serine 663 is a glycosylation site (O-linked (GalNAc...) serine). O-linked (GalNAc...) threonine glycosylation is present at threonine 673. A helical membrane pass occupies residues 696 to 716; the sequence is LVALLVPTCVFLVVLLALGIV. Over 717 to 765 the chain is Cytoplasmic; sequence YCTRCGSHAPNKRITDCYRWVTHAGNKSSTEPMPPRGSLTGVQTCRTSV. Serine 754 bears the Phosphoserine mark.

As to quaternary structure, interacts with PDGFRA; this interaction promotes PDGF receptor signaling pathway. Interacts with integrin beta-1/ITGB1. Interacts with insulin receptor/INSR; this interaction diminishes INSR autophosphorylation. Post-translationally, O-glycosylated by sialylated oligosaccharides. In terms of processing, may be N-glycosylated. Expressed in cell lines derived from endothelial cells, embryonic fibroblasts and preadipocytes. Expressed in skeletal muscle by a subset of pericytes.

The protein localises to the membrane. Cell surface glycoprotein involved in various biological processes including angiogenesis, immune response modulation, and tissue remodeling and repair. Participates in pericyte proliferation through positive modulation of the PDGF receptor signaling pathway. Acts as a scaffold for factor X, triggering allosteric changes and the spatial re-alignment of factor X with the TF-factor VIIa complex, thereby enhancing coagulation activation. Modulates the insulin signaling pathway by interacting with insulin receptor/INSR and by diminishing its capacity to be autophosphorylated in response to insulin. Also regulates LPS-induced inflammatory responses in macrophages by favoring production of proinflammatory cytokines. This chain is Endosialin (Cd248), found in Mus musculus (Mouse).